The following is a 205-amino-acid chain: Small ribosomal subunit protein uS4 (205 aa).

The segment at 20–47 (WGRSKSPLNRGKENPPGQHGQRRKKPSD) is disordered. Residues 94-154 (CRLDAVVYRL…TKSKDMALIL (61 aa)) form the S4 RNA-binding domain.

It belongs to the universal ribosomal protein uS4 family. Part of the 30S ribosomal subunit. Contacts protein S5. The interaction surface between S4 and S5 is involved in control of translational fidelity.

Its function is as follows. One of the primary rRNA binding proteins, it binds directly to 16S rRNA where it nucleates assembly of the body of the 30S subunit. In terms of biological role, with S5 and S12 plays an important role in translational accuracy. This chain is Small ribosomal subunit protein uS4, found in Paramagnetospirillum magneticum (strain ATCC 700264 / AMB-1) (Magnetospirillum magneticum).